Reading from the N-terminus, the 138-residue chain is ATP synthase epsilon chain (138 aa).

This sequence belongs to the ATPase epsilon chain family. In terms of assembly, F-type ATPases have 2 components, CF(1) - the catalytic core - and CF(0) - the membrane proton channel. CF(1) has five subunits: alpha(3), beta(3), gamma(1), delta(1), epsilon(1). CF(0) has three main subunits: a, b and c.

The protein resides in the cell inner membrane. Its function is as follows. Produces ATP from ADP in the presence of a proton gradient across the membrane. The protein is ATP synthase epsilon chain of Psychrobacter sp. (strain PRwf-1).